Reading from the N-terminus, the 79-residue chain is UPF0349 protein BCE_5075 (79 aa).

Belongs to the UPF0349 family.

In Bacillus cereus (strain ATCC 10987 / NRS 248), this protein is UPF0349 protein BCE_5075.